Here is a 428-residue protein sequence, read N- to C-terminus: 2-isopropylmalate synthase 2 (428 aa).

The Pyruvate carboxyltransferase domain occupies 40 to 302; sequence PFFMDVTLRD…EVPLNFSTIY (263 aa). Residues Asp49, His241, His243, and Asn277 each coordinate Mn(2+).

It belongs to the alpha-IPM synthase/homocitrate synthase family. LeuA type 1 subfamily. As to quaternary structure, homodimer. Requires Mn(2+) as cofactor.

It is found in the cytoplasm. It carries out the reaction 3-methyl-2-oxobutanoate + acetyl-CoA + H2O = (2S)-2-isopropylmalate + CoA + H(+). It functions in the pathway amino-acid biosynthesis; L-leucine biosynthesis; L-leucine from 3-methyl-2-oxobutanoate: step 1/4. Its function is as follows. Catalyzes the condensation of the acetyl group of acetyl-CoA with 3-methyl-2-oxobutanoate (2-ketoisovalerate) to form 3-carboxy-3-hydroxy-4-methylpentanoate (2-isopropylmalate). Has high alpha-isopropylmalate synthase activity and low citramalate synthase activity. The sequence is that of 2-isopropylmalate synthase 2 from Leptospira interrogans serogroup Icterohaemorrhagiae serovar Lai (strain 56601).